We begin with the raw amino-acid sequence, 90 residues long: UPF0237 protein BL1209.1 (90 aa).

The ACT domain maps to 5-79 (IITVVGQDTV…DDIGVRIRCQ (75 aa)).

Belongs to the UPF0237 family.

This is UPF0237 protein BL1209.1 from Bifidobacterium longum (strain NCC 2705).